The primary structure comprises 343 residues: Protein RecA (343 aa).

64–71 contacts ATP; the sequence is GPESSGKT.

The protein belongs to the RecA family.

The protein localises to the cytoplasm. Can catalyze the hydrolysis of ATP in the presence of single-stranded DNA, the ATP-dependent uptake of single-stranded DNA by duplex DNA, and the ATP-dependent hybridization of homologous single-stranded DNAs. It interacts with LexA causing its activation and leading to its autocatalytic cleavage. The polypeptide is Protein RecA (Bacillus cereus (strain B4264)).